Reading from the N-terminus, the 825-residue chain is Probable inorganic carbon transporter subunit DabA (825 aa).

Residues cysteine 334, aspartate 336, histidine 521, and cysteine 536 each coordinate Zn(2+).

Belongs to the inorganic carbon transporter (TC 9.A.2) DabA family. Forms a complex with DabB. Zn(2+) is required as a cofactor.

It is found in the cell inner membrane. Its function is as follows. Part of an energy-coupled inorganic carbon pump. This chain is Probable inorganic carbon transporter subunit DabA, found in Acidithiobacillus ferrooxidans (strain ATCC 23270 / DSM 14882 / CIP 104768 / NCIMB 8455) (Ferrobacillus ferrooxidans (strain ATCC 23270)).